The primary structure comprises 94 residues: Putative pterin-4-alpha-carbinolamine dehydratase (94 aa).

Belongs to the pterin-4-alpha-carbinolamine dehydratase family.

It carries out the reaction (4aS,6R)-4a-hydroxy-L-erythro-5,6,7,8-tetrahydrobiopterin = (6R)-L-erythro-6,7-dihydrobiopterin + H2O. The protein is Putative pterin-4-alpha-carbinolamine dehydratase of Mycobacterium sp. (strain JLS).